The sequence spans 842 residues: Outer membrane usher protein AggC (842 aa).

Residues 1-21 form the signal peptide; the sequence is MKTSSFIIVILLCFRIENVIA. Cysteines 819 and 841 form a disulfide.

This sequence belongs to the fimbrial export usher family.

Its subcellular location is the cell outer membrane. Involved in the export and assembly of the AAF/I fimbriae subunits across the outer membrane. The sequence is that of Outer membrane usher protein AggC (aggC) from Escherichia coli.